Consider the following 27-residue polypeptide: Flagellar filament 34 kDa core protein (27 aa).

The protein belongs to the bacterial flagellin family. In terms of assembly, the flagellum consists of an outer layer composed of repeating units of FlaA around a core that contains one or all of five antigenically related polypeptides.

It localises to the periplasmic flagellum. The protein localises to the periplasm. Functionally, component of the core of the flagella. The chain is Flagellar filament 34 kDa core protein from Spirochaeta aurantia.